Reading from the N-terminus, the 602-residue chain is Arginine--tRNA ligase (602 aa).

The short motif at 132 to 142 (ANPTGPLHVGH) is the 'HIGH' region element.

This sequence belongs to the class-I aminoacyl-tRNA synthetase family. In terms of assembly, monomer.

Its subcellular location is the cytoplasm. The catalysed reaction is tRNA(Arg) + L-arginine + ATP = L-arginyl-tRNA(Arg) + AMP + diphosphate. The sequence is that of Arginine--tRNA ligase from Cupriavidus metallidurans (strain ATCC 43123 / DSM 2839 / NBRC 102507 / CH34) (Ralstonia metallidurans).